We begin with the raw amino-acid sequence, 539 residues long: Cytochrome P450 monooxygenase buaD (539 aa).

The signal sequence occupies residues 1–16 (MLVPVLTLLGTLTATG). N-linked (GlcNAc...) asparagine glycosylation is present at asparagine 120. Cysteine 478 serves as a coordination point for heme. An N-linked (GlcNAc...) asparagine glycan is attached at asparagine 520.

It belongs to the cytochrome P450 family. Requires heme as cofactor.

It participates in mycotoxin biosynthesis. In terms of biological role, cytochrome P450 monooxygenase; part of the gene cluster that mediates the biosynthesis of burnettramic acids, an unusual class of bolaamphiphilic pyrrolizidinediones that display potent antibacterial, antifungal, and cytotoxic activities. The first step of the biosynthesis of burnettramic acids is the hydroxylation of proline by the proline hydroxylase buaE to generate 4-hydroxyproline. The PKS-NRPS buaA and trans-enoyl reductase buaC construct the highly reduced polyketide chain, and the condensation (C) domain of buaA then catalyzes the amide bond formation with the activated 4-hydroxyproline. This is followed by the R domain releasing the nascent polyketide-peptide directly via a Dieckmann condensation to afford a tetramic acid fused to the hydroxyproline, generating the bicyclic pyrrolidinedione moiety. The cytochrome P450 monooxygenases buaD and buaG are likely responsible for the multiple hydroxylations on the polyketide chain and its terminus, although in the heterologous context, buaD does not appear to be required. Therefore, while buaG may be a multifunctional cytochrome P450 monooxygenase, it cannot be ruled out that the two secondary alcohols on the polyketide chain could have an acetate origin. Finally, the glycosyltransferase buaB transfers beta-D-mannose to the aglycone burnettramic acid A to form burnettramic acid A. Burnettramic acid B is a minor cis-pyrrolizidine epimer of burnettramic acid A and it is likely that small amounts of it form naturally in acidic environments. This Petromyces alliaceus (Aspergillus alliaceus) protein is Cytochrome P450 monooxygenase buaD.